Reading from the N-terminus, the 441-residue chain is Malate dehydrogenase [NADP], chloroplastic (441 aa).

The transit peptide at 1–58 (MALTQLNSTCSKPQLHSSSQLSFLSRTRTRTLPRHYHSTFAPLHRTQHARISCSVAPN) directs the protein to the chloroplast. Cysteine 76 and cysteine 81 are joined by a disulfide. 105–111 (GAAGMIS) contacts NADP(+). 2 residues coordinate substrate: arginine 186 and arginine 192. Asparagine 199 is a binding site for NADP(+). Glutamine 206 is a binding site for NAD(+). 223-225 (VGN) contacts NADP(+). Residues asparagine 225 and arginine 256 each coordinate substrate. Histidine 281 (proton acceptor) is an active-site residue. A disulfide bridge links cysteine 417 with cysteine 429.

It belongs to the LDH/MDH superfamily. MDH type 2 family. In terms of assembly, homodimer.

The protein resides in the plastid. Its subcellular location is the chloroplast. It catalyses the reaction (S)-malate + NADP(+) = oxaloacetate + NADPH + H(+). With respect to regulation, chloroplast NADP-MDH is activated upon illumination. In order to be enzymatically active, disulfide bridges on the protein must be reduced by thioredoxin which receives electrons from ferredoxin and the electron transport system of photosynthesis. Its function is as follows. The chloroplastic, NADP-dependent form is essential for the photosynthesis C4 cycle, which allows plants to circumvent the problem of photorespiration. In C4 plants, NADP-MDH activity acts to convert oxaloacetate to malate in chloroplasts of mesophyll cells for transport to the bundle sheath cells. This is Malate dehydrogenase [NADP], chloroplastic from Pisum sativum (Garden pea).